The primary structure comprises 194 residues: Imidazoleglycerol-phosphate dehydratase (194 aa).

This sequence belongs to the imidazoleglycerol-phosphate dehydratase family.

It localises to the cytoplasm. The catalysed reaction is D-erythro-1-(imidazol-4-yl)glycerol 3-phosphate = 3-(imidazol-4-yl)-2-oxopropyl phosphate + H2O. It participates in amino-acid biosynthesis; L-histidine biosynthesis; L-histidine from 5-phospho-alpha-D-ribose 1-diphosphate: step 6/9. The polypeptide is Imidazoleglycerol-phosphate dehydratase (Bacillus cereus (strain G9842)).